A 565-amino-acid chain; its full sequence is METTTKKARSLYIPYAGPVLLEFPLLNKGSAFSVEERRNFNLSGLLPEVVESIEEQAERAWLQYQGFKTEIDKHIYLRNIQDTNETLFYRLVQNHLEEMMPVIYTPTVGAACERFSEIYRRARGVFISYPNRHNMDDILQNVPNHNIKVIVVTDGERILGLGDQGIGGMGIPIGKLSLYTACGGISPAYTLPVVLDVGTNNQQLLNDPLYMGWRHPRITDDEYYAFVDEFIQAVKQRWPDILLQFEDFAQKNAMPLLTRYRDEICSFNDDIQGTAAVTVGTLIAASRAAGSQLSEQKIVFLGAGSAGCGIAEQIIAQTQREGLSEDAARQNVFMVDRFGLLTDRMPNLLPFQAKLVQKCDNLQHWDTENDVLSLLDVVRNVKPDILIGVSGQTGLFTEEIIREMHKHCPRPIVMPLSNPTSRVEATPQDIIAWTEGNALVATGSPFSPVIWKDKIYPIAQCNNAYIFPGIGLGVIASGASRITDEMLMSASETLAKHSPLVNNGEGLVLPALKDIQVVSRAIAFAVGKMAQQQGVAVKTSAEALQQAIDDNFWKPEYRDYRRTSI.

Tyr-104 (proton donor) is an active-site residue. Position 157 (Arg-157) interacts with NAD(+). Lys-175 functions as the Proton acceptor in the catalytic mechanism. A divalent metal cation is bound by residues Glu-246, Asp-247, and Asp-270. Positions 270 and 418 each coordinate NAD(+).

It belongs to the malic enzymes family. Homotetramer. Requires Mg(2+) as cofactor. The cofactor is Mn(2+).

The catalysed reaction is (S)-malate + NAD(+) = pyruvate + CO2 + NADH. It catalyses the reaction oxaloacetate + H(+) = pyruvate + CO2. This Salmonella newport (strain SL254) protein is NAD-dependent malic enzyme.